We begin with the raw amino-acid sequence, 401 residues long: Argininosuccinate synthase (401 aa).

Residues 10-18 and Ala38 contribute to the ATP site; that span reads AYSGGVDTS. Residue Tyr89 participates in L-citrulline binding. An ATP-binding site is contributed by Gly119. L-aspartate-binding residues include Thr121, Asn125, and Asp126. L-citrulline is bound at residue Asn125. Residues Arg129, Ser177, Ser186, Glu262, and Tyr274 each contribute to the L-citrulline site.

This sequence belongs to the argininosuccinate synthase family. Type 1 subfamily. As to quaternary structure, homotetramer.

Its subcellular location is the cytoplasm. The enzyme catalyses L-citrulline + L-aspartate + ATP = 2-(N(omega)-L-arginino)succinate + AMP + diphosphate + H(+). The protein operates within amino-acid biosynthesis; L-arginine biosynthesis; L-arginine from L-ornithine and carbamoyl phosphate: step 2/3. The chain is Argininosuccinate synthase from Synechococcus sp. (strain CC9311).